The chain runs to 417 residues: Magnesium-protoporphyrin IX monomethyl ester [oxidative] cyclase, chloroplastic (417 aa).

The transit peptide at 1 to 45 (MASAMELSLLNPAMHHYGIAAKTASHLPVVPARRASSGAVRFRVR) directs the protein to the chloroplast.

Belongs to the AcsF family. The cofactor is Fe cation.

It localises to the plastid. Its subcellular location is the chloroplast membrane. The enzyme catalyses Mg-protoporphyrin IX 13-monomethyl ester + 3 NADPH + 3 O2 + 2 H(+) = 3,8-divinyl protochlorophyllide a + 3 NADP(+) + 5 H2O. The protein operates within porphyrin-containing compound metabolism; chlorophyll biosynthesis. In terms of biological role, catalyzes the formation of the isocyclic ring in chlorophyll biosynthesis. Mediates the cyclase reaction, which results in the formation of divinylprotochlorophyllide (Pchlide) characteristic of all chlorophylls from magnesium-protoporphyrin IX 13-monomethyl ester (MgPMME). This is Magnesium-protoporphyrin IX monomethyl ester [oxidative] cyclase, chloroplastic (CRD1) from Hordeum vulgare (Barley).